The sequence spans 444 residues: Phosphoglucosamine mutase (444 aa).

Ser102 (phosphoserine intermediate) is an active-site residue. Ser102, Asp241, Asp243, and Asp245 together coordinate Mg(2+). Ser102 is modified (phosphoserine).

It belongs to the phosphohexose mutase family. It depends on Mg(2+) as a cofactor. Activated by phosphorylation.

It catalyses the reaction alpha-D-glucosamine 1-phosphate = D-glucosamine 6-phosphate. Catalyzes the conversion of glucosamine-6-phosphate to glucosamine-1-phosphate. The protein is Phosphoglucosamine mutase of Actinobacillus succinogenes (strain ATCC 55618 / DSM 22257 / CCUG 43843 / 130Z).